Reading from the N-terminus, the 248-residue chain is Tyrosine recombinase XerD-like (248 aa).

The region spanning 1 to 72 is the Core-binding (CB) domain; the sequence is MKSYIEPFIA…TANQFLYYLY (72 aa). Residues 85-248 form the Tyr recombinase domain; sequence DTMKVMRTEK…PVTLEKYYKS (164 aa). Active-site residues include lysine 149 and arginine 213. Tyrosine 245 serves as the catalytic O-(3'-phospho-DNA)-tyrosine intermediate.

It belongs to the 'phage' integrase family. XerD-like subfamily.

It is found in the cytoplasm. Putative tyrosine recombinase. Not involved in the cutting and rejoining of the recombining DNA molecules on dif(SL) site. The polypeptide is Tyrosine recombinase XerD-like (Streptococcus pyogenes serotype M4 (strain MGAS10750)).